Here is a 341-residue protein sequence, read N- to C-terminus: N-acetyl-gamma-glutamyl-phosphate reductase (341 aa).

Residue C147 is part of the active site.

It belongs to the NAGSA dehydrogenase family. Type 1 subfamily.

It is found in the cytoplasm. The catalysed reaction is N-acetyl-L-glutamate 5-semialdehyde + phosphate + NADP(+) = N-acetyl-L-glutamyl 5-phosphate + NADPH + H(+). The protein operates within amino-acid biosynthesis; L-arginine biosynthesis; N(2)-acetyl-L-ornithine from L-glutamate: step 3/4. In terms of biological role, catalyzes the NADPH-dependent reduction of N-acetyl-5-glutamyl phosphate to yield N-acetyl-L-glutamate 5-semialdehyde. In Dehalococcoides mccartyi (strain ATCC BAA-2100 / JCM 16839 / KCTC 5957 / BAV1), this protein is N-acetyl-gamma-glutamyl-phosphate reductase.